A 464-amino-acid chain; its full sequence is Soluble pyridine nucleotide transhydrogenase (464 aa).

An FAD-binding site is contributed by 35–44 (DDRRQVGGNC).

It belongs to the class-I pyridine nucleotide-disulfide oxidoreductase family. It depends on FAD as a cofactor.

The protein localises to the cytoplasm. The enzyme catalyses NAD(+) + NADPH = NADH + NADP(+). Its function is as follows. Conversion of NADPH, generated by peripheral catabolic pathways, to NADH, which can enter the respiratory chain for energy generation. This Pseudomonas putida (strain ATCC 47054 / DSM 6125 / CFBP 8728 / NCIMB 11950 / KT2440) protein is Soluble pyridine nucleotide transhydrogenase.